A 293-amino-acid chain; its full sequence is 33 kDa chaperonin (293 aa).

Disulfide bonds link cysteine 237/cysteine 239 and cysteine 271/cysteine 274.

This sequence belongs to the HSP33 family. In terms of processing, under oxidizing conditions two disulfide bonds are formed involving the reactive cysteines. Under reducing conditions zinc is bound to the reactive cysteines and the protein is inactive.

The protein resides in the cytoplasm. In terms of biological role, redox regulated molecular chaperone. Protects both thermally unfolding and oxidatively damaged proteins from irreversible aggregation. Plays an important role in the bacterial defense system toward oxidative stress. The chain is 33 kDa chaperonin from Haemophilus influenzae (strain PittEE).